A 150-amino-acid polypeptide reads, in one-letter code: Dual specificity protein phosphatase 23 (150 aa).

The Tyrosine-protein phosphatase domain maps to 7–150; the sequence is NFSWVLPGRL…AVFQFYQRTK (144 aa). C95 (phosphocysteine intermediate) is an active-site residue.

Belongs to the protein-tyrosine phosphatase family. Non-receptor class dual specificity subfamily. As to expression, widely expressed.

It localises to the cytoplasm. Its subcellular location is the cytosol. The protein localises to the nucleus. The enzyme catalyses O-phospho-L-tyrosyl-[protein] + H2O = L-tyrosyl-[protein] + phosphate. It catalyses the reaction O-phospho-L-seryl-[protein] + H2O = L-seryl-[protein] + phosphate. It carries out the reaction O-phospho-L-threonyl-[protein] + H2O = L-threonyl-[protein] + phosphate. Functionally, protein phosphatase that mediates dephosphorylation of proteins phosphorylated on Tyr and Ser/Thr residues. In vitro, it can dephosphorylate p44-ERK1 (MAPK3) but not p54 SAPK-beta (MAPK10) in vitro. Able to enhance activation of JNK and p38 (MAPK14). The sequence is that of Dual specificity protein phosphatase 23 (Dusp23) from Mus musculus (Mouse).